Here is a 135-residue protein sequence, read N- to C-terminus: Large ribosomal subunit protein eL32 (135 aa).

Belongs to the eukaryotic ribosomal protein eL32 family.

The sequence is that of Large ribosomal subunit protein eL32 from Methanococcus maripaludis (strain C6 / ATCC BAA-1332).